A 208-amino-acid polypeptide reads, in one-letter code: Small ribosomal subunit protein uS4 (208 aa).

The region spanning T97–E158 is the S4 RNA-binding domain.

Belongs to the universal ribosomal protein uS4 family. In terms of assembly, part of the 30S ribosomal subunit. Contacts protein S5. The interaction surface between S4 and S5 is involved in control of translational fidelity.

Its function is as follows. One of the primary rRNA binding proteins, it binds directly to 16S rRNA where it nucleates assembly of the body of the 30S subunit. In terms of biological role, with S5 and S12 plays an important role in translational accuracy. The protein is Small ribosomal subunit protein uS4 of Xylella fastidiosa (strain M12).